A 107-amino-acid polypeptide reads, in one-letter code: MGRKRLITDSYPVVKRREGPAGHSKGELAPELGEEPQPRDEEEAELELLRQFDLAWQYGPCTGITRLQRWCRAKQMGLEPPPEVWQVLKTHPGDPRFQCSLWHLYPL.

A PCNA-interaction protein motif (PIP box) motif is present at residues 1–16 (MGRKRLITDSYPVVKR). The interval 1–44 (MGRKRLITDSYPVVKRREGPAGHSKGELAPELGEEPQPRDEEEA) is disordered. Residues 15–28 (KRREGPAGHSKGEL) show a composition bias toward basic and acidic residues.

It belongs to the DNA polymerase delta subunit 4 family. As to quaternary structure, component of the tetrameric DNA polymerase delta complex (Pol-delta4), which consists of POLD1/p125, POLD2/p50, POLD3/p66/p68 and POLD4/p12, with POLD1 bearing DNA polymerase and 3' to 5' proofreading exonuclease activities. Within this complex, directly interacts with POLD1 and POLD2. Directly interacts with PCNA, as do POLD1 and POLD3; this interaction stimulates Pol-delta4 polymerase activity. As POLD1 and POLD2, directly interacts with WRNIP1; this interaction stimulates DNA polymerase delta-mediated DNA synthesis, independently of the presence of PCNA. This stimulation may be due predominantly to an increase of initiation frequency and also to increased processivity. Upon genotoxic stress induced by DNA damaging agents or by replication stress, POLD4 is proteolytically degraded and Pol-delta4 is converted into a trimeric form of the complex (Pol-delta3) which has an increased proofreading activity. The DNA polymerase delta complex interacts with POLDIP2; this interaction is probably mediated through direct binding to POLD2. Post-translationally, ubiquitinated; undergoes 'Lys-48'-linked ubiquitination in response to UV irradiation, leading to proteasomal degradation. This modification is partly mediated by RNF8 and by the DCX(DTL) E3 ubiquitin ligase complex (also called CRL4(CDT2)). Efficient degradation requires the presence of PCNA and is required for the inhibition of fork progression after DNA damage.

The protein resides in the nucleus. Its function is as follows. As a component of the tetrameric DNA polymerase delta complex (Pol-delta4), plays a role in high fidelity genome replication and repair. Within this complex, increases the rate of DNA synthesis and decreases fidelity by regulating POLD1 polymerase and proofreading 3' to 5' exonuclease activity. Pol-delta4 participates in Okazaki fragment processing, through both the short flap pathway, as well as a nick translation system. Under conditions of DNA replication stress, required for the repair of broken replication forks through break-induced replication (BIR), a mechanism that may induce segmental genomic duplications of up to 200 kb. Involved in Pol-delta4 translesion synthesis (TLS) of templates carrying O6-methylguanine or abasic sites. Its degradation in response to DNA damage is required for the inhibition of fork progression and cell survival. This Homo sapiens (Human) protein is DNA polymerase delta subunit 4 (POLD4).